A 457-amino-acid polypeptide reads, in one-letter code: MSEQQIDWDLALIQKYNYSGPRYTSYPTALEFSEDFEDAAFLQAVARYPERPLSLYVHIPFCHKLCYFCGCNKIVTRQQHKADQYLDALEQEIRHRAPLFADRHVSQLHWGGGTPTYLNKAQISRLMTLLRENFHFNTDAEISIEVDPREIELDVLDHLRAEGFNRLSMGVQDFNKEVQRLVNREQDEEFIFALLNHARDIGFTSTNIDLIYGLPKQTPESFAFTLKRVTELNPDRLSVFNYAHLPTLFAAQRKIKDADLPSAQQKLDILQETIVSLTQAGYQFIGMDHFARPDDELAVAQREGVLHRNFQGYTTQGDTDLLGMGVSAISMIGDGYMQNQKELKRYYQQVDERGNALWRGITLTRDDCIRRDVIKALICNFRLDFNAVEQQWGLHFAEYFAEDLQLLSPLAKDGLVDISEKGIQVTAKGRLLIRNICMCFDAYLRQKARMQQFSRVI.

In terms of domain architecture, Radical SAM core spans 47–280 (RYPERPLSLY…QETIVSLTQA (234 aa)). Tyr56 is a binding site for S-adenosyl-L-methionine. Cys62 and Cys66 together coordinate [4Fe-4S] cluster. Residue Phe68 coordinates S-adenosyl-L-methionine. Cys69 is a [4Fe-4S] cluster binding site. Residues Gly112, 113 to 114 (GT), Glu145, Gln172, Arg184, Asp209, Ala243, and Ile329 contribute to the S-adenosyl-L-methionine site.

It belongs to the anaerobic coproporphyrinogen-III oxidase family. In terms of assembly, monomer. It depends on [4Fe-4S] cluster as a cofactor.

It localises to the cytoplasm. The enzyme catalyses coproporphyrinogen III + 2 S-adenosyl-L-methionine = protoporphyrinogen IX + 2 5'-deoxyadenosine + 2 L-methionine + 2 CO2. The protein operates within porphyrin-containing compound metabolism; protoporphyrin-IX biosynthesis; protoporphyrinogen-IX from coproporphyrinogen-III (AdoMet route): step 1/1. In terms of biological role, involved in the heme biosynthesis. Catalyzes the anaerobic oxidative decarboxylation of propionate groups of rings A and B of coproporphyrinogen III to yield the vinyl groups in protoporphyrinogen IX. The chain is Oxygen-independent coproporphyrinogen III oxidase (hemN) from Salmonella typhi.